Here is a 385-residue protein sequence, read N- to C-terminus: DNA replication and repair protein RecF (385 aa).

30–37 contributes to the ATP binding site; that stretch reads GPNGNGKT.

It belongs to the RecF family.

The protein localises to the cytoplasm. The RecF protein is involved in DNA metabolism; it is required for DNA replication and normal SOS inducibility. RecF binds preferentially to single-stranded, linear DNA. It also seems to bind ATP. The chain is DNA replication and repair protein RecF from Mycobacterium leprae (strain Br4923).